We begin with the raw amino-acid sequence, 834 residues long: MPRYPFRRFGFGALRRLLYLWVRSETINQSAFTLKIDRSKPVLYVLQQPSVSDLAVVDTECRKAGLPRPVMPVAVGDAIEPAAFFYLTPEPDWLGRQDKRGASPTLVRMLAAVGQNGLDDAQIIPVSVFWGQSPDSESSPWKLLFADNWAVTGRLRKLARILILGRKTRVQFSAPIHLRELVEQGKGHERTLRMVNRILRVHFRNLKTAVIGPDLSHRRNLVKGLLRAPLVRQAISEECESERISQEKAEGIALRYANEIASDFSYPVIRFLEVILSWFWNKLYEGVKVNHIERVQDVAQGNEIVYVPCHRSHIDYLLLSYLLFRNGLTPPHIAAGINLNMPVIGSILRRGGAFFMRRSFKGNQLYTAVFNEYLHTLFSRGFSTEYFVEGGRSRTGRMLHPRTGMLAITLRSFLRDSRRPIVFVPVYIGYERVLEGRTYLGELRGATKKKESIFDLFKVVGALKQRFGQVWVNFGEPIHLDQFLDRHQPDWQDQDLGPEYRPDWLPQTTNLLAKDVARHLNDAAAINPVNLVALALLSTSRQALDESALARILDLYLALLRKVPYSPSATLPDGDGQALIEYVKSMNLLAEQKDALGRILYLDEQNAVLATYYRNNVLHVFALPALIASFFQSNSRISREQLLRFARALYPYLQAELFIRWSLDELDAVIDQWLAALVEQDLLRQENDTFIRPAPSSRQYVLLILLARSVTQTLQRFYMAIALLLNAGQNALTAEELENLCTVMAQRLSILHGLNAPEFFDKSLFRHFIQTLLDLRVLRKDEAGKLSYHELLGELAEGAAKRVLPAEIRLSIRQVALERPAEEAAAESNDAAAN.

The HXXXXD motif motif lies at 309 to 314 (CHRSHI).

This sequence belongs to the GPAT/DAPAT family.

It localises to the cell inner membrane. It catalyses the reaction sn-glycerol 3-phosphate + an acyl-CoA = a 1-acyl-sn-glycero-3-phosphate + CoA. It functions in the pathway phospholipid metabolism; CDP-diacylglycerol biosynthesis; CDP-diacylglycerol from sn-glycerol 3-phosphate: step 1/3. The chain is Glycerol-3-phosphate acyltransferase from Pseudomonas aeruginosa (strain LESB58).